We begin with the raw amino-acid sequence, 383 residues long: Succinyl-diaminopimelate desuccinylase (383 aa).

Histidine 73 is a binding site for Zn(2+). Aspartate 75 is a catalytic residue. Zn(2+) is bound at residue aspartate 107. Glutamate 141 (proton acceptor) is an active-site residue. Zn(2+)-binding residues include glutamate 142, glutamate 170, and histidine 356.

This sequence belongs to the peptidase M20A family. DapE subfamily. In terms of assembly, homodimer. Requires Zn(2+) as cofactor. Co(2+) serves as cofactor.

It catalyses the reaction N-succinyl-(2S,6S)-2,6-diaminopimelate + H2O = (2S,6S)-2,6-diaminopimelate + succinate. It participates in amino-acid biosynthesis; L-lysine biosynthesis via DAP pathway; LL-2,6-diaminopimelate from (S)-tetrahydrodipicolinate (succinylase route): step 3/3. Functionally, catalyzes the hydrolysis of N-succinyl-L,L-diaminopimelic acid (SDAP), forming succinate and LL-2,6-diaminopimelate (DAP), an intermediate involved in the bacterial biosynthesis of lysine and meso-diaminopimelic acid, an essential component of bacterial cell walls. The polypeptide is Succinyl-diaminopimelate desuccinylase (Pseudomonas fluorescens (strain Pf0-1)).